The sequence spans 2009 residues: ADP-ribosylation factor guanine nucleotide-exchange factor SEC7 (2009 aa).

Positions 1 to 220 are disordered; the sequence is MSEQNSVVNA…ISLSSNGSNT (220 aa). Positions 17 to 33 are enriched in polar residues; that stretch reads ISSNVETASSVNPSVKP. The segment covering 37–53 has biased composition (basic and acidic residues); sequence IKEEAKETNGEDQKCKG. Positions 91-118 are enriched in acidic residues; that stretch reads EGEDGDEDEDEDEDEDEDNGDEDDEDVD. Residues 134–143 are compositionally biased toward low complexity; sequence SVSGESTESS. Residues 144–154 show a composition bias toward acidic residues; that stretch reads SGEDEESDESD. Residues 155-165 are compositionally biased toward low complexity; that stretch reads GNTSNSSSGDE. The span at 166-184 shows a compositional bias: acidic residues; the sequence is SGSEEEEEEEEEEEEEENA. The segment covering 194–209 has biased composition (polar residues); that stretch reads SVPTNDSTAPRSTHTR. Positions 210-220 are enriched in low complexity; the sequence is NISLSSNGSNT. A phosphoserine mark is found at serine 212 and serine 215. A Phosphothreonine modification is found at threonine 334. Phosphoserine is present on residues serine 447, serine 452, and serine 455. Positions 653 to 657 match the HUS box motif; it reads NYDCN. Over residues 771 to 788 the composition is skewed to low complexity; the sequence is SSARQESRSSLSNDVRSS. A disordered region spans residues 771-814; the sequence is SSARQESRSSLSNDVRSSIMTSNDDFKPTYEDEESRSLSSQNID. A Glycyl lysine isopeptide (Lys-Gly) (interchain with G-Cter in ubiquitin) cross-link involves residue lysine 797. Residue serine 807 is modified to Phosphoserine. The SEC7 domain occupies 824–1010; the sequence is LKLRKTALSE…LFNEIANNEI (187 aa). Aspartate 940 is a Mg(2+) binding site. Residues 1017–1220 are HDS1 domain; it reads HQAMLSGDTN…QARVANPRVS (204 aa). A Phosphoserine modification is found at serine 1226. Threonine 1240 is modified (phosphothreonine). Positions 1708 to 1723 are enriched in polar residues; the sequence is GRKSSVSHHQTTNDTS. The tract at residues 1708 to 1803 is disordered; that stretch reads GRKSSVSHHQ…KKTKHMKRNE (96 aa). Residues 1724 to 1751 are compositionally biased toward basic and acidic residues; the sequence is QHSDDDSNDRRENDSNISETVERAHQEE. A phosphoserine mark is found at serine 1741 and serine 1752. Polar residues predominate over residues 1764–1777; that stretch reads LNGQTKLNNGNSVP. Residues 1836 to 1883 are C2 domain-interacting region (CIR); sequence FENEDFAHCIPYKEAIRITRLLEKSYEFSRDFNEDYGLRTRLVEARVV.

In terms of assembly, interacts with ARF1. Interacts (via C-terminus) with RSP5 ubiquitin ligase.

Its subcellular location is the cytoplasm. It is found in the golgi apparatus. The protein localises to the trans-Golgi network. It localises to the cytoplasmic vesicle. The protein resides in the COPI-coated vesicle membrane. Its subcellular location is the COPII-coated vesicle membrane. Guanine exchange factor that acts as an activator of ARF1 at the trans-Golgi network and is thus involved in vesicular budding and traffic between compartments of the Golgi apparatus. Activation of Arf (ADP-ribosylation factor) GTPases is essential for vesicle formation via recruitment of cargo adapters and coat proteins necessary for Golgi trafficking. Also plays an essential role in ER-to-Golgi traffic. SEC7 also acts as an effector of two Rab GTPases, YPT1 and YPT31/32. The chain is ADP-ribosylation factor guanine nucleotide-exchange factor SEC7 from Saccharomyces cerevisiae (strain ATCC 204508 / S288c) (Baker's yeast).